The following is an 86-amino-acid chain: Small ribosomal subunit protein bS20 (86 aa).

Residues M1–K25 are disordered. Residues K12–K22 show a composition bias toward basic and acidic residues.

It belongs to the bacterial ribosomal protein bS20 family.

In terms of biological role, binds directly to 16S ribosomal RNA. The protein is Small ribosomal subunit protein bS20 of Nocardioides sp. (strain ATCC BAA-499 / JS614).